Reading from the N-terminus, the 345-residue chain is UDP-N-acetylenolpyruvoylglucosamine reductase (345 aa).

Residues 16 to 186 (LPAYASNVIS…VSVGIKLMKS (171 aa)) enclose the FAD-binding PCMH-type domain. R162 is a catalytic residue. Residue S232 is the Proton donor of the active site. E328 is a catalytic residue.

This sequence belongs to the MurB family. FAD is required as a cofactor.

The protein resides in the cytoplasm. It catalyses the reaction UDP-N-acetyl-alpha-D-muramate + NADP(+) = UDP-N-acetyl-3-O-(1-carboxyvinyl)-alpha-D-glucosamine + NADPH + H(+). The protein operates within cell wall biogenesis; peptidoglycan biosynthesis. In terms of biological role, cell wall formation. The protein is UDP-N-acetylenolpyruvoylglucosamine reductase of Yersinia pestis.